Reading from the N-terminus, the 397-residue chain is MFQKVDAYAGDPILSLMERFKEDPRSDKVNLSIGLYYNDDGIIPQLQAVAEAEARLNAEPHGASLYLPMEGFSGYRQAIAPLLFGAEHTALKQNRIASIQTVGGSGALKVGADFLKRYFPESHVWVSDPTWENHIAIFEGAGFEVSTYPWFDKATNGVRFENLLAMLQTLPARDIVLLHPCCHNPTGADLTPAQWDRVVEVLKARQLIPFLDIAYQGFGGGLEEDAYAIRAIASAGMPMLVSNSFSKIFSLYGERVGGLSVVCEDSETAGRVLGQLKATVRRNYSSPPSFGAQVVATVLNDAALKATWQAEVDAMRAHILTMRQALVDALQQVAPGSKVDYLLKQRGMFSYTGFSAAQVDRLRDEFGVYLIASGRMRVAGLNSRNVQQVAKAFVAVM.

The substrate site is built by glycine 34, tyrosine 66, tryptophan 131, and asparagine 184. An N6-(pyridoxal phosphate)lysine modification is found at lysine 247. Substrate is bound at residue arginine 375.

It belongs to the class-I pyridoxal-phosphate-dependent aminotransferase family. As to quaternary structure, homodimer. The cofactor is pyridoxal 5'-phosphate.

The catalysed reaction is L-tyrosine + 2-oxoglutarate = 3-(4-hydroxyphenyl)pyruvate + L-glutamate. The enzyme catalyses 4-methylsulfanyl-2-oxobutanoate + L-tyrosine = 3-(4-hydroxyphenyl)pyruvate + L-methionine. It catalyses the reaction an aromatic L-alpha-amino acid + 2-oxoglutarate = an aromatic oxo-acid + L-glutamate. It carries out the reaction L-aspartate + 2-oxoglutarate = oxaloacetate + L-glutamate. The protein operates within amino-acid biosynthesis; L-methionine biosynthesis via salvage pathway; L-methionine from S-methyl-5-thio-alpha-D-ribose 1-phosphate: step 6/6. Inhibited by malate and nitrotyrosine by approximately 20% at the higher concentration. At 100 uM, canaline and carboxymethoxylamine inhibit aminotransferase activity by 35 and 70%, respectively. Addition of 1.0 mM carboxymethoxylamine lead to a complete inhibition of the aminotransferase activity. Its function is as follows. catalyzes the formation of methionine from 2-keto-4-methylthiobutyrate (KMTB) primarily using aromatic amino acids (tyrosine, phenylalanine and tryptophan) or glutamate as the amino donors. Histidine, leucine, asparagine, or arginine are also functional amino donors but to a lesser extent. Can also use alpha-ketoglutarate, oxaloacetate and pyruvate as the amino acceptors. In Klebsiella pneumoniae, this protein is Tyrosine aminotransferase (tyrB).